The sequence spans 463 residues: Siroheme synthase (463 aa).

The segment at 1 to 203 (MDYLPLFHKL…GQGAEAERLL (203 aa)) is precorrin-2 dehydrogenase /sirohydrochlorin ferrochelatase. Residues 22-23 (EI) and 43-44 (PD) contribute to the NAD(+) site. Residue serine 128 is modified to Phosphoserine. The uroporphyrinogen-III C-methyltransferase stretch occupies residues 216-463 (GEVYLVGAGP…LAWFEGSQNS (248 aa)). Residue proline 225 participates in S-adenosyl-L-methionine binding. The active-site Proton acceptor is aspartate 248. Lysine 270 acts as the Proton donor in catalysis. Residues 301–303 (GGD), isoleucine 306, 331–332 (TA), methionine 383, and glycine 412 each bind S-adenosyl-L-methionine.

The protein in the N-terminal section; belongs to the precorrin-2 dehydrogenase / sirohydrochlorin ferrochelatase family. It in the C-terminal section; belongs to the precorrin methyltransferase family.

It catalyses the reaction uroporphyrinogen III + 2 S-adenosyl-L-methionine = precorrin-2 + 2 S-adenosyl-L-homocysteine + H(+). The catalysed reaction is precorrin-2 + NAD(+) = sirohydrochlorin + NADH + 2 H(+). It carries out the reaction siroheme + 2 H(+) = sirohydrochlorin + Fe(2+). It functions in the pathway cofactor biosynthesis; adenosylcobalamin biosynthesis; precorrin-2 from uroporphyrinogen III: step 1/1. Its pathway is cofactor biosynthesis; adenosylcobalamin biosynthesis; sirohydrochlorin from precorrin-2: step 1/1. The protein operates within porphyrin-containing compound metabolism; siroheme biosynthesis; precorrin-2 from uroporphyrinogen III: step 1/1. It participates in porphyrin-containing compound metabolism; siroheme biosynthesis; siroheme from sirohydrochlorin: step 1/1. It functions in the pathway porphyrin-containing compound metabolism; siroheme biosynthesis; sirohydrochlorin from precorrin-2: step 1/1. Functionally, multifunctional enzyme that catalyzes the SAM-dependent methylations of uroporphyrinogen III at position C-2 and C-7 to form precorrin-2 via precorrin-1. Then it catalyzes the NAD-dependent ring dehydrogenation of precorrin-2 to yield sirohydrochlorin. Finally, it catalyzes the ferrochelation of sirohydrochlorin to yield siroheme. This chain is Siroheme synthase, found in Pseudomonas putida (strain ATCC 700007 / DSM 6899 / JCM 31910 / BCRC 17059 / LMG 24140 / F1).